Reading from the N-terminus, the 118-residue chain is Large ribosomal subunit protein uL24 (118 aa).

The protein belongs to the universal ribosomal protein uL24 family. As to quaternary structure, part of the 50S ribosomal subunit.

Its function is as follows. One of two assembly initiator proteins, it binds directly to the 5'-end of the 23S rRNA, where it nucleates assembly of the 50S subunit. One of the proteins that surrounds the polypeptide exit tunnel on the outside of the subunit. This Prochlorococcus marinus (strain MIT 9313) protein is Large ribosomal subunit protein uL24.